A 281-amino-acid chain; its full sequence is Diphthine methyl ester synthase (281 aa).

S-adenosyl-L-methionine-binding positions include Leu9, Asp84, Gly87, 112-113 (SI), and Leu163. The residue at position 171 (Ser171) is a Phosphoserine. 2 residues coordinate S-adenosyl-L-methionine: Val225 and His250.

The protein belongs to the diphthine synthase family.

It carries out the reaction 2-[(3S)-amino-3-carboxypropyl]-L-histidyl-[translation elongation factor 2] + 4 S-adenosyl-L-methionine = diphthine methyl ester-[translation elongation factor 2] + 4 S-adenosyl-L-homocysteine + 3 H(+). It functions in the pathway protein modification; peptidyl-diphthamide biosynthesis. Its function is as follows. S-adenosyl-L-methionine-dependent methyltransferase that catalyzes four methylations of the modified target histidine residue in translation elongation factor 2 (EF-2), to form an intermediate called diphthine methyl ester. The four successive methylation reactions represent the second step of diphthamide biosynthesis. In Mus musculus (Mouse), this protein is Diphthine methyl ester synthase (Dph5).